A 265-amino-acid polypeptide reads, in one-letter code: MPQVTMRQMLEAGVHFGHQTRYWNPKMAPYIFGARGKIHIINLEKTVPLFNDAMNFLSSVAQKRGTVLFLGTKRSARESIKEEAERCNMPFMTQRWLGGTLTNFRTVKQSVARLKELEAAETDGTFDKLVKHEVLGLRREREKLDASLGGIKEMNRLPDAIFVIDIGHEDIAIKEAKKLGIPVIAVVDTNYDPALVDYAIPGNDDAIRAVQLYARAAADAVLEGKAAAPNSASVREEEFSADAADEGKGRRAPAKKGDKKADAAE.

The tract at residues 226–265 is disordered; it reads AAAPNSASVREEEFSADAADEGKGRRAPAKKGDKKADAAE. A compositionally biased stretch (basic and acidic residues) spans 245–265; that stretch reads DEGKGRRAPAKKGDKKADAAE.

Belongs to the universal ribosomal protein uS2 family.

This Xanthomonas axonopodis pv. citri (strain 306) protein is Small ribosomal subunit protein uS2.